Reading from the N-terminus, the 576-residue chain is Adenine deaminase (576 aa).

It belongs to the metallo-dependent hydrolases superfamily. Adenine deaminase family. It depends on Mn(2+) as a cofactor.

The catalysed reaction is adenine + H2O + H(+) = hypoxanthine + NH4(+). This Syntrophobacter fumaroxidans (strain DSM 10017 / MPOB) protein is Adenine deaminase.